A 122-amino-acid chain; its full sequence is Large ribosomal subunit protein uL14 (122 aa).

This sequence belongs to the universal ribosomal protein uL14 family. In terms of assembly, part of the 50S ribosomal subunit. Forms a cluster with proteins L3 and L19. In the 70S ribosome, L14 and L19 interact and together make contacts with the 16S rRNA in bridges B5 and B8.

Binds to 23S rRNA. Forms part of two intersubunit bridges in the 70S ribosome. The protein is Large ribosomal subunit protein uL14 of Dehalococcoides mccartyi (strain ATCC BAA-2266 / KCTC 15142 / 195) (Dehalococcoides ethenogenes (strain 195)).